Consider the following 264-residue polypeptide: Thymidylate synthase (264 aa).

Residue Arg21 coordinates dUMP. Residue His51 coordinates (6R)-5,10-methylene-5,6,7,8-tetrahydrofolate. A dUMP-binding site is contributed by 126–127 (RR). Cys146 acts as the Nucleophile in catalysis. DUMP contacts are provided by residues 166–169 (RSCD), Asn177, and 207–209 (HLY). Asp169 lines the (6R)-5,10-methylene-5,6,7,8-tetrahydrofolate pocket. Residue Ala263 participates in (6R)-5,10-methylene-5,6,7,8-tetrahydrofolate binding.

Belongs to the thymidylate synthase family. Bacterial-type ThyA subfamily. Homodimer.

It localises to the cytoplasm. The catalysed reaction is dUMP + (6R)-5,10-methylene-5,6,7,8-tetrahydrofolate = 7,8-dihydrofolate + dTMP. Its pathway is pyrimidine metabolism; dTTP biosynthesis. In terms of biological role, catalyzes the reductive methylation of 2'-deoxyuridine-5'-monophosphate (dUMP) to 2'-deoxythymidine-5'-monophosphate (dTMP) while utilizing 5,10-methylenetetrahydrofolate (mTHF) as the methyl donor and reductant in the reaction, yielding dihydrofolate (DHF) as a by-product. This enzymatic reaction provides an intracellular de novo source of dTMP, an essential precursor for DNA biosynthesis. The protein is Thymidylate synthase of Baumannia cicadellinicola subsp. Homalodisca coagulata.